Reading from the N-terminus, the 614-residue chain is Dihydroxy-acid dehydratase (614 aa).

Residue aspartate 81 participates in Mg(2+) binding. Cysteine 122 is a [2Fe-2S] cluster binding site. Mg(2+) contacts are provided by aspartate 123 and lysine 124. The residue at position 124 (lysine 124) is an N6-carboxylysine. A [2Fe-2S] cluster-binding site is contributed by cysteine 193. Glutamate 489 serves as a coordination point for Mg(2+). The Proton acceptor role is filled by serine 515.

The protein belongs to the IlvD/Edd family. As to quaternary structure, homodimer. It depends on [2Fe-2S] cluster as a cofactor. Requires Mg(2+) as cofactor.

It catalyses the reaction (2R)-2,3-dihydroxy-3-methylbutanoate = 3-methyl-2-oxobutanoate + H2O. The enzyme catalyses (2R,3R)-2,3-dihydroxy-3-methylpentanoate = (S)-3-methyl-2-oxopentanoate + H2O. It participates in amino-acid biosynthesis; L-isoleucine biosynthesis; L-isoleucine from 2-oxobutanoate: step 3/4. The protein operates within amino-acid biosynthesis; L-valine biosynthesis; L-valine from pyruvate: step 3/4. Functions in the biosynthesis of branched-chain amino acids. Catalyzes the dehydration of (2R,3R)-2,3-dihydroxy-3-methylpentanoate (2,3-dihydroxy-3-methylvalerate) into 2-oxo-3-methylpentanoate (2-oxo-3-methylvalerate) and of (2R)-2,3-dihydroxy-3-methylbutanoate (2,3-dihydroxyisovalerate) into 2-oxo-3-methylbutanoate (2-oxoisovalerate), the penultimate precursor to L-isoleucine and L-valine, respectively. The polypeptide is Dihydroxy-acid dehydratase (Marinomonas sp. (strain MWYL1)).